Reading from the N-terminus, the 295-residue chain is Sulfotransferase 1E1 (295 aa).

Position 48–53 (48–53 (KSGTTW)) interacts with 3'-phosphoadenylyl sulfate. 106-108 (KTH) serves as a coordination point for substrate. Histidine 108 acts as the Proton acceptor in catalysis. 3'-phosphoadenylyl sulfate-binding residues include arginine 130 and serine 138. Position 156 is a phosphoserine (serine 156). 3'-phosphoadenylyl sulfate-binding positions include tyrosine 193, 227–232 (TSFQEM), and 257–259 (RKG).

This sequence belongs to the sulfotransferase 1 family. In terms of assembly, homodimer. Testis and at very low level in the placenta.

The protein resides in the cytoplasm. Its subcellular location is the cytosol. It carries out the reaction estrone + 3'-phosphoadenylyl sulfate = estrone 3-sulfate + adenosine 3',5'-bisphosphate + H(+). It catalyses the reaction 17beta-estradiol + 3'-phosphoadenylyl sulfate = 17beta-estradiol 3-sulfate + adenosine 3',5'-bisphosphate + H(+). The enzyme catalyses (24S)-hydroxycholesterol + 3'-phosphoadenylyl sulfate = (24S)-hydroxycholesterol 3-sulfate + adenosine 3',5'-bisphosphate + H(+). The catalysed reaction is 3beta-hydroxyandrost-5-en-17-one + 3'-phosphoadenylyl sulfate = dehydroepiandrosterone 3-sulfate + adenosine 3',5'-bisphosphate + H(+). It carries out the reaction 4-ethylphenol + 3'-phosphoadenylyl sulfate = 4-ethylphenyl sulfate + adenosine 3',5'-bisphosphate + H(+). Inhibited by estradiol. Functionally, sulfotransferase that utilizes 3'-phospho-5'-adenylyl sulfate (PAPS) as sulfonate donor to catalyze the sulfate conjugation of estradiol and estrone. Is a key enzyme in estrogen homeostasis, the sulfation of estrogens leads to their inactivation. Also sulfates dehydroepiandrosterone, pregnenolone, (24S)-hydroxycholesterol and xenobiotic compounds like ethinylestradiol, equalenin, diethyl stilbesterol and 1-naphthol at significantly lower efficiency. Does not sulfonate cortisol, testosterone and dopamine. May play a role in gut microbiota-host metabolic interaction. O-sulfonates 4-ethylphenol (4-EP), a dietary tyrosine-derived metabolite produced by gut bacteria. The product 4-EPS crosses the blood-brain barrier and may negatively regulate oligodendrocyte maturation and myelination, affecting the functional connectivity of different brain regions associated with the limbic system. The polypeptide is Sulfotransferase 1E1 (Sult1e1) (Mus musculus (Mouse)).